A 954-amino-acid polypeptide reads, in one-letter code: Glycine dehydrogenase (decarboxylating) (954 aa).

Lysine 704 is subject to N6-(pyridoxal phosphate)lysine.

This sequence belongs to the GcvP family. As to quaternary structure, the glycine cleavage system is composed of four proteins: P, T, L and H. Pyridoxal 5'-phosphate serves as cofactor.

It catalyses the reaction N(6)-[(R)-lipoyl]-L-lysyl-[glycine-cleavage complex H protein] + glycine + H(+) = N(6)-[(R)-S(8)-aminomethyldihydrolipoyl]-L-lysyl-[glycine-cleavage complex H protein] + CO2. The glycine cleavage system catalyzes the degradation of glycine. The P protein binds the alpha-amino group of glycine through its pyridoxal phosphate cofactor; CO(2) is released and the remaining methylamine moiety is then transferred to the lipoamide cofactor of the H protein. This chain is Glycine dehydrogenase (decarboxylating), found in Allorhizobium ampelinum (strain ATCC BAA-846 / DSM 112012 / S4) (Agrobacterium vitis (strain S4)).